Reading from the N-terminus, the 373-residue chain is Chaperone protein DnaJ (373 aa).

In terms of domain architecture, J spans 4–68 (DFYEILGVSR…QARANYDRFG (65 aa)). A CR-type zinc finger spans residues 132 to 214 (GGEKEIRINH…CGGQGHIQVS (83 aa)). Zn(2+)-binding residues include Cys145, Cys148, Cys162, Cys165, Cys188, Cys191, Cys202, and Cys205. CXXCXGXG motif repeat units lie at residues 145 to 152 (CKTCQGTG), 162 to 169 (CSTCGGVG), 188 to 195 (CPTCGGSG), and 202 to 209 (CESCGGQG).

This sequence belongs to the DnaJ family. In terms of assembly, homodimer. Zn(2+) serves as cofactor.

The protein localises to the cytoplasm. Its function is as follows. Participates actively in the response to hyperosmotic and heat shock by preventing the aggregation of stress-denatured proteins and by disaggregating proteins, also in an autonomous, DnaK-independent fashion. Unfolded proteins bind initially to DnaJ; upon interaction with the DnaJ-bound protein, DnaK hydrolyzes its bound ATP, resulting in the formation of a stable complex. GrpE releases ADP from DnaK; ATP binding to DnaK triggers the release of the substrate protein, thus completing the reaction cycle. Several rounds of ATP-dependent interactions between DnaJ, DnaK and GrpE are required for fully efficient folding. Also involved, together with DnaK and GrpE, in the DNA replication of plasmids through activation of initiation proteins. This Thermosynechococcus vestitus (strain NIES-2133 / IAM M-273 / BP-1) protein is Chaperone protein DnaJ.